Reading from the N-terminus, the 196-residue chain is Probable malonic semialdehyde reductase RutE (196 aa).

The protein belongs to the nitroreductase family. HadB/RutE subfamily. FMN serves as cofactor.

The enzyme catalyses 3-hydroxypropanoate + NADP(+) = 3-oxopropanoate + NADPH + H(+). May reduce toxic product malonic semialdehyde to 3-hydroxypropionic acid, which is excreted. The chain is Probable malonic semialdehyde reductase RutE from Escherichia coli O81 (strain ED1a).